Reading from the N-terminus, the 198-residue chain is NADH-quinone oxidoreductase subunit B (198 aa).

Positions 62, 63, 128, and 158 each coordinate [4Fe-4S] cluster.

It belongs to the complex I 20 kDa subunit family. In terms of assembly, NDH-1 is composed of 14 different subunits. Subunits NuoB, C, D, E, F, and G constitute the peripheral sector of the complex. It depends on [4Fe-4S] cluster as a cofactor.

The protein resides in the cell inner membrane. The enzyme catalyses a quinone + NADH + 5 H(+)(in) = a quinol + NAD(+) + 4 H(+)(out). Its function is as follows. NDH-1 shuttles electrons from NADH, via FMN and iron-sulfur (Fe-S) centers, to quinones in the respiratory chain. The immediate electron acceptor for the enzyme in this species is believed to be a menaquinone. Couples the redox reaction to proton translocation (for every two electrons transferred, four hydrogen ions are translocated across the cytoplasmic membrane), and thus conserves the redox energy in a proton gradient. In Phocaeicola vulgatus (strain ATCC 8482 / DSM 1447 / JCM 5826 / CCUG 4940 / NBRC 14291 / NCTC 11154) (Bacteroides vulgatus), this protein is NADH-quinone oxidoreductase subunit B.